The sequence spans 146 residues: UPF0178 protein BcerKBAB4_2842 (146 aa).

Belongs to the UPF0178 family.

The polypeptide is UPF0178 protein BcerKBAB4_2842 (Bacillus mycoides (strain KBAB4) (Bacillus weihenstephanensis)).